The following is a 227-amino-acid chain: 2,3-bisphosphoglycerate-dependent phosphoglycerate mutase (227 aa).

Substrate-binding positions include 7–14 (RHGQSEWN), 20–21 (TG), R59, 86–89 (ERHY), K97, 113–114 (RR), and 182–183 (GN). The active-site Tele-phosphohistidine intermediate is H8. E86 (proton donor/acceptor) is an active-site residue.

The protein belongs to the phosphoglycerate mutase family. BPG-dependent PGAM subfamily. Homodimer.

It carries out the reaction (2R)-2-phosphoglycerate = (2R)-3-phosphoglycerate. Its pathway is carbohydrate degradation; glycolysis; pyruvate from D-glyceraldehyde 3-phosphate: step 3/5. Functionally, catalyzes the interconversion of 2-phosphoglycerate and 3-phosphoglycerate. The sequence is that of 2,3-bisphosphoglycerate-dependent phosphoglycerate mutase from Neisseria meningitidis serogroup B (strain ATCC BAA-335 / MC58).